Here is a 358-residue protein sequence, read N- to C-terminus: Methylthioribose-1-phosphate isomerase (358 aa).

Substrate-binding positions include 54 to 56 (RGA), arginine 96, and glutamine 205. Catalysis depends on aspartate 246, which acts as the Proton donor. A substrate-binding site is contributed by 256 to 257 (NK).

It belongs to the eIF-2B alpha/beta/delta subunits family. MtnA subfamily.

It carries out the reaction 5-(methylsulfanyl)-alpha-D-ribose 1-phosphate = 5-(methylsulfanyl)-D-ribulose 1-phosphate. It participates in amino-acid biosynthesis; L-methionine biosynthesis via salvage pathway; L-methionine from S-methyl-5-thio-alpha-D-ribose 1-phosphate: step 1/6. In terms of biological role, catalyzes the interconversion of methylthioribose-1-phosphate (MTR-1-P) into methylthioribulose-1-phosphate (MTRu-1-P). The polypeptide is Methylthioribose-1-phosphate isomerase (Pseudomonas aeruginosa (strain UCBPP-PA14)).